The sequence spans 61 residues: Small ribosomal subunit protein uS14 (61 aa).

Zn(2+) is bound by residues cysteine 24, cysteine 27, cysteine 40, and cysteine 43.

This sequence belongs to the universal ribosomal protein uS14 family. Zinc-binding uS14 subfamily. In terms of assembly, part of the 30S ribosomal subunit. Contacts proteins S3 and S10. Zn(2+) serves as cofactor.

In terms of biological role, binds 16S rRNA, required for the assembly of 30S particles and may also be responsible for determining the conformation of the 16S rRNA at the A site. In Syntrophotalea carbinolica (strain DSM 2380 / NBRC 103641 / GraBd1) (Pelobacter carbinolicus), this protein is Small ribosomal subunit protein uS14.